The following is a 1216-amino-acid chain: Apical endosomal glycoprotein (1216 aa).

Residues 1 to 21 (MCLPSCLLSIWVLFMAAQSLG) form the signal peptide. The Extracellular segment spans residues 22–1155 (KTWVPDHCRS…SQGRVAAPVS (1134 aa)). Positions 27 to 54 (DHCRSPTEATCNFVCDCGDCSDEAQCGF) constitute an LDL-receptor class A 1; truncated domain. In terms of domain architecture, MAM 1 spans 62–224 (NTPFTCNFEQ…DDMEFWDCGL (163 aa)). An N-linked (GlcNAc...) asparagine glycan is attached at Asn205. The LDL-receptor class A 2 domain maps to 229–269 (ARCPLGHHHCQNKACVEPHQLCDGEDNCGDSSDEDPLICSH). Intrachain disulfides connect Cys231-Cys243, Cys238-Cys256, and Cys250-Cys267. Residues 268 to 427 (SHHMATDFET…DLIMSNHCIL (160 aa)) form the MAM 2 domain. N-linked (GlcNAc...) asparagine glycans are attached at residues Asn291, Asn341, and Asn368. The LDL-receptor class A 3 domain occupies 454 to 491 (RTCDAGHLSCDELCVPPEQLCDFQQHCAEGEDEEKCGT). Disulfide bonds link Cys456–Cys467, Cys463–Cys480, and Cys474–Cys489. MAM domains lie at 492 to 647 (TDFE…DCNP), 654 to 813 (DQEV…PCWA), 812 to 973 (WAAK…PCAQ), and 972 to 1142 (AQPG…HCKQ). Asn639 carries an N-linked (GlcNAc...) asparagine glycan. Asn839 is a glycosylation site (N-linked (GlcNAc...) asparagine). The helical transmembrane segment at 1156–1176 (VPVAVGGALLLFLLLLGLGGW) threads the bilayer. Residues 1177–1216 (HWLQKQHLPCQSTDAAASGFDNILFNADQVTLPESITSNP) lie on the Cytoplasmic side of the membrane.

Apical endosomal tubules of developing rat intestinal epithelial cells.

The protein localises to the membrane. Probably involved in the sorting and selective transport of receptors and ligands across polarized epithelia. The protein is Apical endosomal glycoprotein (Mamdc4) of Rattus norvegicus (Rat).